A 400-amino-acid chain; its full sequence is Enoyl-[acyl-carrier-protein] reductase [NADH] (400 aa).

NAD(+)-binding positions include 48–53 (GSSSGY), 74–75 (FE), 111–112 (DA), and 139–140 (LA). Tyr225 is a binding site for substrate. The active-site Proton donor is Tyr235. NAD(+) contacts are provided by residues Lys244 and 273 to 275 (VVT).

Belongs to the TER reductase family. Monomer.

The enzyme catalyses a 2,3-saturated acyl-[ACP] + NAD(+) = a (2E)-enoyl-[ACP] + NADH + H(+). The protein operates within lipid metabolism; fatty acid biosynthesis. In terms of biological role, involved in the final reduction of the elongation cycle of fatty acid synthesis (FAS II). Catalyzes the reduction of a carbon-carbon double bond in an enoyl moiety that is covalently linked to an acyl carrier protein (ACP). The sequence is that of Enoyl-[acyl-carrier-protein] reductase [NADH] from Shewanella piezotolerans (strain WP3 / JCM 13877).